We begin with the raw amino-acid sequence, 432 residues long: Putative D-alanyl-D-alanine carboxypeptidase (432 aa).

The chain crosses the membrane as a helical; Signal-anchor span at residues 7–25 (ATVLLTFSLSAFAVEYPVL).

This sequence belongs to the peptidase S12 family. YfeW subfamily.

The protein localises to the cell inner membrane. It carries out the reaction Preferential cleavage: (Ac)2-L-Lys-D-Ala-|-D-Ala. Also transpeptidation of peptidyl-alanyl moieties that are N-acyl substituents of D-alanine.. The sequence is that of Putative D-alanyl-D-alanine carboxypeptidase from Salmonella gallinarum (strain 287/91 / NCTC 13346).